The primary structure comprises 387 residues: Zinc finger protein neuro-d4 (387 aa).

Glycyl lysine isopeptide (Lys-Gly) (interchain with G-Cter in SUMO2) cross-links involve residues K106, K129, and K133. Residues 195 to 218 (YVCDICGKRYKNRPGLSYHYTHTH) form a C2H2-type zinc finger. 2 consecutive PHD-type zinc fingers follow at residues 271-328 (NGYC…CKSC) and 325-375 (CKSC…CLRH). Positions 274, 277, 293, 296, 301, 304, 322, 325, 328, 331, 343, 346, 351, 354, 369, and 372 each coordinate Zn(2+).

This sequence belongs to the requiem/DPF family. Component of neuron-specific chromatin remodeling complex (nBAF complex) composed of at least, ARID1A/BAF250A or ARID1B/BAF250B, SMARCD1/BAF60A, SMARCD3/BAF60C, SMARCA2/BRM/BAF190B, SMARCA4/BRG1/BAF190A, SMARCB1/BAF47, SMARCC1/BAF155, SMARCE1/BAF57, SMARCC2/BAF170, DPF1/BAF45B, DPF3/BAF45C, ACTL6B/BAF53B and actin.

It localises to the cytoplasm. It is found in the nucleus. May have an important role in developing neurons by participating in regulation of cell survival, possibly as a neurospecific transcription factor. Belongs to the neuron-specific chromatin remodeling complex (nBAF complex). During neural development a switch from a stem/progenitor to a postmitotic chromatin remodeling mechanism occurs as neurons exit the cell cycle and become committed to their adult state. The transition from proliferating neural stem/progenitor cells to postmitotic neurons requires a switch in subunit composition of the npBAF and nBAF complexes. As neural progenitors exit mitosis and differentiate into neurons, npBAF complexes which contain ACTL6A/BAF53A and PHF10/BAF45A, are exchanged for homologous alternative ACTL6B/BAF53B and DPF1/BAF45B or DPF3/BAF45C subunits in neuron-specific complexes (nBAF). The npBAF complex is essential for the self-renewal/proliferative capacity of the multipotent neural stem cells. The nBAF complex along with CREST plays a role regulating the activity of genes essential for dendrite growth. The polypeptide is Zinc finger protein neuro-d4 (Homo sapiens (Human)).